The sequence spans 253 residues: uncharacterized protein (253 aa).

The protein belongs to the NAD(P)-dependent epimerase/dehydratase family.

This is an uncharacterized protein from Bacillus subtilis (strain 168).